Reading from the N-terminus, the 343-residue chain is Dihydroorotase (343 aa).

Zn(2+)-binding residues include His14 and His16. Substrate contacts are provided by residues 16–18 (HVR) and Asn42. Zn(2+) is bound by residues Lys98, His135, and His173. Lys98 carries the N6-carboxylysine modification. Residue His135 participates in substrate binding. Leu219 is a binding site for substrate. Asp247 serves as a coordination point for Zn(2+). The active site involves Asp247. Substrate contacts are provided by His251 and Ala263.

It belongs to the metallo-dependent hydrolases superfamily. DHOase family. Class II DHOase subfamily. As to quaternary structure, homodimer. Zn(2+) serves as cofactor.

The catalysed reaction is (S)-dihydroorotate + H2O = N-carbamoyl-L-aspartate + H(+). It participates in pyrimidine metabolism; UMP biosynthesis via de novo pathway; (S)-dihydroorotate from bicarbonate: step 3/3. Catalyzes the reversible cyclization of carbamoyl aspartate to dihydroorotate. This is Dihydroorotase from Marinobacter nauticus (strain ATCC 700491 / DSM 11845 / VT8) (Marinobacter aquaeolei).